A 356-amino-acid polypeptide reads, in one-letter code: DNA polymerase IV (356 aa).

The 182-residue stretch at 7-188 (IIHIDMDCFY…LPLKKIPRVG (182 aa)) folds into the UmuC domain. Mg(2+) contacts are provided by Asp-11 and Asp-106. Glu-107 is an active-site residue.

Belongs to the DNA polymerase type-Y family. As to quaternary structure, monomer. It depends on Mg(2+) as a cofactor.

Its subcellular location is the cytoplasm. The catalysed reaction is DNA(n) + a 2'-deoxyribonucleoside 5'-triphosphate = DNA(n+1) + diphosphate. In terms of biological role, poorly processive, error-prone DNA polymerase involved in untargeted mutagenesis. Copies undamaged DNA at stalled replication forks, which arise in vivo from mismatched or misaligned primer ends. These misaligned primers can be extended by PolIV. Exhibits no 3'-5' exonuclease (proofreading) activity. May be involved in translesional synthesis, in conjunction with the beta clamp from PolIII. The chain is DNA polymerase IV from Actinobacillus pleuropneumoniae serotype 5b (strain L20).